The sequence spans 656 residues: MTGAKRKKKSMLWSKMHTPQCEDIIQWCRRRLPILDWAPHYNLKENLLPDTVSGIMLAVQQVTQGLAFAVLSSVHPVFGLYGSLFPAIIYAIFGMGHHVATGTFALTSLISANAVERIVPQNMQNLTTQSNTSVLGLSDFEMQRIHVAAAVSFLGGVIQVAMFVLQLGSATFVVTEPVISAMTTGAATHVVTSQVKYLLGMKMPYISGPLGFFYIYAYVFENIKSVRLEALLLSLLSIVVLVLVKELNEQFKRKIKVVLPVDLVLIIAASFACYCTNMENTYGLEVVGHIPQGIPSPRAPPMNILSAVITEAFGVALVGYVASLALAQGSAKKFKYSIDDNQEFLAHGLSNIVSSFFFCIPSAAAMGRTAGLYSTGAKTQVACLISCIFVLIVIYAIGPLLYWLPMCVLASIIVVGLKGMLIQFRDLKKYWNVDKIDWGIWVSTYVFTICFAANVGLLFGVVCTIAIVIGRFPRAMTVSIKNMKEMEFKVKTEMDSETLQQVKIISINNPLVFLNAKKFYTDLMNMIQKENACNQPLDDISKCEQNTLLNSLSNGNCNEEASQSCPNEKCYLILDCSGFTFFDYSGVSMLVEVYMDCKGRSVDVLLAHCTASLIKAMTYYGNLDSEKPIFFESVSAAISHIHSNKNLSKLSDHSEV.

Over 1 to 75 (MTGAKRKKKS…LAFAVLSSVH (75 aa)) the chain is Cytoplasmic. A helical membrane pass occupies residues 76–96 (PVFGLYGSLFPAIIYAIFGMG). Residues 97–144 (HHVATGTFALTSLISANAVERIVPQNMQNLTTQSNTSVLGLSDFEMQR) are Extracellular-facing. The chain crosses the membrane as a helical span at residues 145–165 (IHVAAAVSFLGGVIQVAMFVL). Glutamine 166 is a topological domain (cytoplasmic). A helical transmembrane segment spans residues 167-187 (LGSATFVVTEPVISAMTTGAA). Residues 188 to 202 (THVVTSQVKYLLGMK) are Extracellular-facing. Residues 203-223 (MPYISGPLGFFYIYAYVFENI) form a helical membrane-spanning segment. Over 224–227 (KSVR) the chain is Cytoplasmic. The helical transmembrane segment at 228–248 (LEALLLSLLSIVVLVLVKELN) threads the bilayer. At 249-254 (EQFKRK) the chain is on the extracellular side. The helical transmembrane segment at 255 to 275 (IKVVLPVDLVLIIAASFACYC) threads the bilayer. The Cytoplasmic segment spans residues 276–306 (TNMENTYGLEVVGHIPQGIPSPRAPPMNILS). A helical transmembrane segment spans residues 307–327 (AVITEAFGVALVGYVASLALA). Topologically, residues 328 to 343 (QGSAKKFKYSIDDNQE) are extracellular. A helical membrane pass occupies residues 344–364 (FLAHGLSNIVSSFFFCIPSAA). Over 365–383 (AMGRTAGLYSTGAKTQVAC) the chain is Cytoplasmic. 2 helical membrane passes run 384–404 (LISC…LYWL) and 405–425 (PMCV…IQFR). The Extracellular segment spans residues 426–448 (DLKKYWNVDKIDWGIWVSTYVFT). A helical transmembrane segment spans residues 449–469 (ICFAANVGLLFGVVCTIAIVI). Residues 470–656 (GRFPRAMTVS…LSKLSDHSEV (187 aa)) are Cytoplasmic-facing. The STAS domain occupies 492 to 641 (TEMDSETLQQ…ESVSAAISHI (150 aa)). The tract at residues 641–656 (IHSNKNLSKLSDHSEV) is membrane targeting.

The protein belongs to the SLC26A/SulP transporter (TC 2.A.53) family. As to expression, expressed in the thyroid gland (at protein level). Expressed in tonsillar high endothelial venule endothelial cells (HEVEC), placenta and in testis, expressed in a subgroup of basal cells in the epididymal ducts.

It is found in the basolateral cell membrane. Its subcellular location is the recycling endosome membrane. The protein localises to the apical cell membrane. The protein resides in the lateral cell membrane. The catalysed reaction is chloride(in) = chloride(out). It carries out the reaction iodide(out) = iodide(in). It catalyses the reaction bromide(in) = bromide(out). The enzyme catalyses oxalate(in) = oxalate(out). The catalysed reaction is nitrate(in) = nitrate(out). It carries out the reaction sulfate(in) = sulfate(out). It catalyses the reaction thiocyanate(in) = thiocyanate(out). The enzyme catalyses D-gluconate(in) = D-gluconate(out). The catalysed reaction is hydrogencarbonate(in) = hydrogencarbonate(out). It carries out the reaction hydrogencarbonate(in) + chloride(out) = hydrogencarbonate(out) + chloride(in). Its activity is regulated as follows. Is active at both alkaline and acidic pH. Activity is inhibited by 4,4'-Di-isothiocyanatostilbene-2,2'-disulfonic acid (DIDS - an inhibitor of several anion channels and transporters). In terms of biological role, acts as an anion channel mediating the transport of chloride, sulfate and oxalate ions. Mediates the transport of bromide, iodide, nitrate, gluconate, thiocyanate and bicarbonate ions. Its permeability towards bicarbonate is weak and increases when pH is above 7. Mediates thiocyanate transport in retinal pigment epithelium cells. Mediates iodide transport in the thyroid gland, playing an important role in the synthesis of thyroid hormones and the maintenance of thyroid function. Although it is an anion channel, according to PubMed:12736153 and PubMed:32119864 it has been shown to exhibit chloride-bicarbonate exchanger activity. This is Anion exchange transporter from Homo sapiens (Human).